A 30-amino-acid chain; its full sequence is Cyclotide hypa-A (30 aa).

A cross-link (cyclopeptide (Gly-Asn)) is located at residues 1 to 30; that stretch reads GIPCAESCVYIPCTITALLGCSCKNKVCYN. 3 disulfides stabilise this stretch: cysteine 4/cysteine 21, cysteine 8/cysteine 23, and cysteine 13/cysteine 28.

Post-translationally, this is a cyclic peptide.

Its function is as follows. Probably participates in a plant defense mechanism. The chain is Cyclotide hypa-A from Pombalia parviflora (Violetilla).